The primary structure comprises 223 residues: MKRTKQINHASFRKSWSARHLTPVALAVSAVFMLAACEQADETVSMYQNADDCSAANPGKSEQCTTAFNSAKEEAAKTAPKYASRADCVAEFGEGQCQQAPAQAGVGNTNAESQSSGSFWMPLMAGYMMGRLMGGGMGGQQQPLFSSKSPTSPANGKFVDASGKNYGAATPGRTMTVPKSALAPKPATTSTVTRGGFGESVAKQNTMQRNSSSTGSANRSMGG.

Residues 166-223 form a disordered region; the sequence is YGAATPGRTMTVPKSALAPKPATTSTVTRGGFGESVAKQNTMQRNSSSTGSANRSMGG. The span at 202–223 shows a compositional bias: polar residues; it reads AKQNTMQRNSSSTGSANRSMGG.

It belongs to the UPF0441 family.

The chain is UPF0441 protein ETA_04310 from Erwinia tasmaniensis (strain DSM 17950 / CFBP 7177 / CIP 109463 / NCPPB 4357 / Et1/99).